We begin with the raw amino-acid sequence, 279 residues long: Calcium-activated potassium channel subunit beta-3 (279 aa).

The Cytoplasmic segment spans residues 1–60 (MDFSPSSELGFHFVAFILLTRHRTAFPASGKKRETDYSDGDPLDVHKRLPSSAGEDRAVM). A helical transmembrane segment spans residues 61-81 (LGFAMMGFSVLMFFLLGTTIL). Residues 82-207 (KPFMLSIQRE…DVILIKKYDQ (126 aa)) lie on the Extracellular side of the membrane. Asparagine 131 is a glycosylation site (N-linked (GlcNAc...) asparagine). The chain crosses the membrane as a helical span at residues 208–228 (MAIFHCLFWPSLTLLGGALIV). Residues 229 to 279 (GMVRLTQHLSLLCEKYSTVVRDEVGGKVPYIEQHQFKLCIMRRSKGRAEKS) lie on the Cytoplasmic side of the membrane.

Belongs to the KCNMB (TC 8.A.14.1) family. KCNMB3 subfamily. In terms of assembly, interacts with KCNMA1 tetramer. There are probably 4 molecules of KCMNB3 per KCNMA1 tetramer. Post-translationally, N-glycosylated. The extracellular domain contains disulfide bond essential for the gating mechanism. Isoform 1, isoform 3 and isoform 4 are widely expressed. Isoform 2 is expressed placenta, pancreas, kidney and heart. Isoform 1 and isoform 3 are highly expressed in pancreas and testis.

The protein localises to the membrane. Regulatory subunit of the calcium activated potassium KCNMA1 (maxiK) channel. Modulates the calcium sensitivity and gating kinetics of KCNMA1, thereby contributing to KCNMA1 channel diversity. Alters the functional properties of the current expressed by the KCNMA1 channel. Isoform 2, isoform 3 and isoform 4 partially inactivate the current of KCNBMA. Isoform 4 induces a fast and incomplete inactivation of KCNMA1 channel that is detectable only at large depolarizations. In contrast, isoform 1 does not induce detectable inactivation of KCNMA1. Two or more subunits of KCNMB3 are required to block the KCNMA1 tetramer. This Homo sapiens (Human) protein is Calcium-activated potassium channel subunit beta-3 (KCNMB3).